The chain runs to 244 residues: Complement C1q subcomponent subunit A (244 aa).

Positions 1-22 (MEAPRGWLVISVLAISLASSVT) are cleaved as a signal peptide. Positions 28 to 94 (APDGTHGSAG…PGPSGPMGPA (67 aa)) are disordered. Residues 31–109 (GTHGSAGIPG…KGTKGSPGNI (79 aa)) enclose the Collagen-like domain. 4-hydroxyproline occurs at positions 39 and 45. Lysine 48 is subject to 5-hydroxylysine. Lysine 48 is a glycosylation site (O-linked (Gal...) hydroxylysine). Residues proline 54 and proline 57 each carry the 4-hydroxyproline modification. Lysine 67 is subject to 5-hydroxylysine. An O-linked (Gal...) hydroxylysine glycan is attached at lysine 67. Proline 73, proline 79, and proline 85 each carry 4-hydroxyproline. Residues 79 to 94 (PGRMGYPGPSGPMGPA) show a composition bias toward low complexity. Lysine 100 is subject to 5-hydroxylysine. O-linked (Gal...) hydroxylysine glycosylation occurs at lysine 100. Residues 110–244 (KDQPRPAFSA…FSGFLIFPSA (135 aa)) form the C1q domain. The N-linked (GlcNAc...) asparagine glycan is linked to asparagine 146. The cysteines at positions 172 and 189 are disulfide-linked. Glutamine 198 contacts Ca(2+).

In terms of assembly, core component of the complement C1 complex, a calcium-dependent complex composed of 1 molecule of the C1Q subcomplex, 2 molecules of C1R and 2 molecules of C1S. The C1Q subcomplex is composed 18 subunits: 3 chains of C1QA, C1QB, and C1QC trimerize to form 6 collagen-like triple helices connected to six globular ligand-recognition modules (C1q domain). Interacts with CR1 (via Sushi 24 and Sushi 25 domains). Interacts (via C-terminus) with CD33; this interaction activates CD33 inhibitory motifs. O-linked glycans are assumed to be the Glc-Gal disaccharides typically found as secondary modifications of hydroxylated lysines in collagen-like domains.

It is found in the secreted. Its subcellular location is the cell surface. The C1Q subcomplex is inhibited by sulfated molecules, such as triterpenoid sulfates, heparan sulfate, or chondroitin sulfates. Core component of the complement C1 complex, a multiprotein complex that initiates the classical pathway of the complement system, a cascade of proteins that leads to phagocytosis and breakdown of pathogens and signaling that strengthens the adaptive immune system. The classical complement pathway is initiated by the C1Q subcomplex of the C1 complex, which specifically binds IgG or IgM immunoglobulins complexed with antigens, forming antigen-antibody complexes on the surface of pathogens: C1QA, together with C1QB and C1QC, specifically recognizes and binds the Fc regions of IgG or IgM via its C1q domain. Immunoglobulin-binding activates the proenzyme C1R, which cleaves C1S, initiating the proteolytic cascade of the complement system. The C1Q subcomplex is activated by a hexamer of IgG complexed with antigens, while it is activated by a pentameric IgM. The C1Q subcomplex also recognizes and binds phosphatidylserine exposed on the surface of cells undergoing programmed cell death, possibly promoting activation of the complement system. The sequence is that of Complement C1q subcomponent subunit A (C1QA) from Bos taurus (Bovine).